Here is a 1322-residue protein sequence, read N- to C-terminus: Putative DNA ligase 4 (1322 aa).

The ATP site is built by Glu-265, Lys-267, Arg-272, Arg-287, Glu-317, Phe-387, Glu-497, Lys-502, Arg-513, Lys-519, and Lys-521. Lys-267 serves as the catalytic N6-AMP-lysine intermediate. Glu-317 is a binding site for Mg(2+). Residue Glu-497 coordinates Mg(2+). BRCT domains are found at residues 686-768 (LDVQ…PKFD) and 825-935 (ERFC…TYSL). Disordered regions lie at residues 945–1212 (IERS…SATC) and 1245–1310 (AEAK…KKVS). The span at 957–969 (DKLEENEKADTSH) shows a compositional bias: basic and acidic residues. Composition is skewed to basic residues over residues 970-979 (VKHAPRKRGR) and 994-1005 (PVRRTRARRGNQ). Basic and acidic residues-rich tracts occupy residues 1007–1022 (AKID…HGET) and 1033–1047 (NISK…KDQV). Residues 1051–1063 (PVRRTRARRGKQH) are compositionally biased toward basic residues. Basic and acidic residues-rich tracts occupy residues 1082 to 1104 (DDQR…RDQG), 1125 to 1161 (AKID…KDQE), and 1190 to 1204 (PKHE…RDTA). Over residues 1261–1288 (SSYVAPVPQASASSASSSGVPAPHAGSS) the composition is skewed to low complexity.

The protein belongs to the ATP-dependent DNA ligase family. Requires Mg(2+) as cofactor.

The protein resides in the nucleus. The catalysed reaction is ATP + (deoxyribonucleotide)n-3'-hydroxyl + 5'-phospho-(deoxyribonucleotide)m = (deoxyribonucleotide)n+m + AMP + diphosphate.. In terms of biological role, DNA ligase involved in DNA non-homologous end joining (NHEJ); required for double-strand break (DSB) repair. The chain is Putative DNA ligase 4 (LIG4) from Oryza sativa subsp. japonica (Rice).